The following is a 198-amino-acid chain: Basic helix-loop-helix transcription factor amos (198 aa).

The tract at residues 76 to 131 (EQQQHHLQANPLGKNQGRSPRYWNKQQRSKPYDKLSTSMSSSTSSASSSSSSSAGF) is disordered. Residues 111–129 (STSMSSSTSSASSSSSSSA) are compositionally biased toward low complexity. The 53-residue stretch at 138 to 190 (KRRLAANARERRRMNSLNDAFDKLRDVVPSLGHDRRLSKYETLQMAQAYIGDL) folds into the bHLH domain.

Efficient DNA binding requires dimerization with another bHLH protein. Interacts with Daughterless (da). During embryonic development, expression is seen in a small cluster of ectodermal cells during stage 10 which becomes restricted to 1 cell by stage 11. Expression is lost from this cell in the thorax and then the abdomen. Later expression is restricted to sensory organ precursors. Very transient expression was detected in distal leg disks at approximately 0-4 hours after puparium formation (APF), correlating with the anlage of the innervated tarsal claw.

Its subcellular location is the nucleus. Transcription factor involved in early neurogenesis; sensillum basiconica formation and maybe sensillum trichodea development. Promotes multiple dendritic (MD) neuron formation. Required for olfactory sensilla; regulated by lozenge (lz). The polypeptide is Basic helix-loop-helix transcription factor amos (amos) (Drosophila melanogaster (Fruit fly)).